Reading from the N-terminus, the 127-residue chain is MMSYLIVFFGAGIGGMARHMVNLTAMRWGLTEFPFGTLFINMLGSFLIGAVVETFALKAGLPQHWRLFLTTGILGGFTTFSAFSLETVLLYERGKVFLAASYAVASVTLSVGALLLALHLVRTLIRG.

4 helical membrane passes run 1 to 21, 32 to 52, 71 to 91, and 96 to 116; these read MMSY…RHMV, EFPF…GAVV, TGIL…VLLY, and VFLA…ALLL. Residues G75 and T78 each contribute to the Na(+) site.

This sequence belongs to the fluoride channel Fluc/FEX (TC 1.A.43) family.

The protein resides in the cell inner membrane. The enzyme catalyses fluoride(in) = fluoride(out). Na(+) is not transported, but it plays an essential structural role and its presence is essential for fluoride channel function. Its function is as follows. Fluoride-specific ion channel. Important for reducing fluoride concentration in the cell, thus reducing its toxicity. The polypeptide is Fluoride-specific ion channel FluC (Granulibacter bethesdensis (strain ATCC BAA-1260 / CGDNIH1)).